The sequence spans 1007 residues: Zinc finger CCCH domain-containing protein 4 (1007 aa).

The Helicase ATP-binding domain maps to 28–192 (VEKVKGNRVT…FRDLGRGERV (165 aa)). Position 41–48 (41–48 (GDTGCGKS)) interacts with ATP. The DEAH box motif lies at 139–142 (DEIH). One can recognise a Helicase C-terminal domain in the interval 250–420 (LIHRLLLHIH…EQVLMICCAE (171 aa)). 2 C3H1-type zinc fingers span residues 723-750 (ALEN…HSSR) and 751-778 (APRP…HDSG).

This is Zinc finger CCCH domain-containing protein 4 from Oryza sativa subsp. japonica (Rice).